The chain runs to 712 residues: Nucleolin (712 aa).

The tract at residues 1–305 is disordered; sequence MVKLAKAGKN…KKQKVEGTEP (305 aa). 3 positions are modified to N6-acetyllysine: K9, K15, and K16. A compositionally biased stretch (acidic residues) spans 24 to 43; that stretch reads VEEDSEDEEMSEDEEDDSSG. Phosphoserine is present on residues S28, S34, S41, and S42. The span at 56 to 107 shows a compositional bias: low complexity; that stretch reads AAATSAKKVVVSPTKKVAVATPAKKAAVTPGKKAAATPAKKTVTPAKAVTTP. Residues 58–65 form repeat 1; that stretch reads ATSAKKVV. Positions 58–135 are 8 X 8 AA tandem repeats of X-T-P-X-K-K-X-X; sequence ATSAKKVVVS…GAAIPAKGAK (78 aa). The residue at position 67 (S67) is a Phosphoserine. T69, T76, T84, and T92 each carry phosphothreonine. 3 consecutive repeat copies span residues 75–82, 83–90, and 91–98. Residue K96 is modified to N6-acetyllysine. A Phosphothreonine modification is found at T99. Residues 99-104 form a 5; truncated repeat; that stretch reads TPAKAV. K102 is modified (N6-acetyllysine). Repeat unit 6 spans residues 105-112; sequence TTPGKKGA. Position 106 is a phosphothreonine (T106). The residue at position 109 (K109) is an N6-acetyllysine. The residue at position 113 (T113) is a Phosphothreonine. An N6-acetyllysine modification is found at K116. 2 repeat units span residues 120 to 127 and 128 to 135. T121 bears the Phosphothreonine mark. Residues 122 to 137 show a composition bias toward low complexity; it reads PGKKGAAIPAKGAKNG. K124 carries the N6-acetyllysine modification. Residues S145 and S153 each carry the phosphoserine modification. Residues 145–171 show a composition bias toward acidic residues; the sequence is SDEEEEDDSEEDEDDDEDEDEDEDEIE. Low complexity predominate over residues 172–183; it reads PAAMKAAAAAPA. Residues S184 and S206 each carry the phosphoserine modification. The span at 184 to 211 shows a compositional bias: acidic residues; the sequence is SEDEDDEDDEDDEDEDDDEEDDSEEEAM. T214 is modified (phosphothreonine). Positions 234 to 274 are enriched in acidic residues; it reads EDEDEEEDDEDEDDDDDDDDDDEDDEDEDDEEEEEEEEEEP. Basic and acidic residues predominate over residues 275–302; that stretch reads VKEAPGKRKKEMAKQKAAPEAKKQKVEG. A Glycyl lysine isopeptide (Lys-Gly) (interchain with G-Cter in SUMO1); alternate cross-link involves residue K299. A Glycyl lysine isopeptide (Lys-Gly) (interchain with G-Cter in SUMO2); alternate cross-link involves residue K299. The residue at position 303 (T303) is a Phosphothreonine. 2 RRM domains span residues 309-385 and 395-468; these read FNLF…KPKG and RTLL…YTGE. At K320 the chain carries N6-acetyllysine. K326 participates in a covalent cross-link: Glycyl lysine isopeptide (Lys-Gly) (interchain with G-Cter in SUMO1); alternate. K326 participates in a covalent cross-link: Glycyl lysine isopeptide (Lys-Gly) (interchain with G-Cter in SUMO2); alternate. Position 350 is an N6-acetyllysine (K350). S358 carries the phosphoserine modification. Phosphothreonine is present on T369. A Glycyl lysine isopeptide (Lys-Gly) (interchain with G-Cter in SUMO2) cross-link involves residue K372. Residue K379 forms a Glycyl lysine isopeptide (Lys-Gly) (interchain with G-Cter in SUMO2); alternate linkage. An N6-acetyllysine; alternate modification is found at K379. Residues K400 and K405 each carry the N6-acetyllysine modification. Phosphothreonine is present on T407. 2 positions are modified to N6-acetyllysine: K429 and K446. A phosphoserine mark is found at S460 and S462. Residues K469 and K479 each carry the N6-acetyllysine modification. An RRM 3 domain is found at 488 to 562; that stretch reads KTLVLSNLSY…RAIRLELQGP (75 aa). A Glycyl lysine isopeptide (Lys-Gly) (interchain with G-Cter in SUMO2); alternate cross-link involves residue K515. K515 bears the N6-acetyllysine; alternate mark. At K523 the chain carries N6-acetyllysine. At S565 the chain carries Phosphoserine. Residue K574 is modified to N6-acetyllysine. An RRM 4 domain is found at 574–649; that stretch reads KTLFVKGLSE…NKVTLDWAKP (76 aa). Residue K579 forms a Glycyl lysine isopeptide (Lys-Gly) (interchain with G-Cter in SUMO2); alternate linkage. Residue K579 is modified to N6-acetyllysine; alternate. S582 carries the phosphoserine modification. K591 is covalently cross-linked (Glycyl lysine isopeptide (Lys-Gly) (interchain with G-Cter in SUMO1); alternate). A Glycyl lysine isopeptide (Lys-Gly) (interchain with G-Cter in SUMO2); alternate cross-link involves residue K591. 2 positions are modified to phosphoserine: S593 and S621. Residue K626 forms a Glycyl lysine isopeptide (Lys-Gly) (interchain with G-Cter in SUMO2) linkage. The disordered stretch occupies residues 642-712; it reads VTLDWAKPKG…KPQGKKTKFE (71 aa). An N6-acetyllysine modification is found at K648. Over residues 652-698 the composition is skewed to gly residues; the sequence is EGGFGGRGGGRGGFGGRGGGRGGRGGFGGRGRGGFGGRGGFRGGRGG. An asymmetric dimethylarginine mark is found at R658, R662, R668, R672, R675, R681, R683, R689, and R693. The residue at position 696 (R696) is an Asymmetric dimethylarginine; alternate. R696 carries the omega-N-methylarginine; alternate modification. Residues 699–712 show a composition bias toward basic and acidic residues; sequence GGDHKPQGKKTKFE.

Identified in a IGF2BP1-dependent mRNP granule complex containing untranslated mRNAs. Component of the SWAP complex that consists of NPM1, NCL/nucleolin, PARP1 and SWAP70. Component of a complex which is at least composed of HTATSF1/Tat-SF1, the P-TEFb complex components CDK9 and CCNT1, RNA polymerase II, SUPT5H, and NCL/nucleolin. Interacts with AICDA. Interacts with APTX. Interacts with C1QBP. Interacts with ERBB4. Interacts (via C-terminus) with FMR1 isoform 6 (via N-terminus). Interacts with GZF1; this interaction is important for nucleolar localization of GZF1. Interacts with NSUN2. Interacts with NVL. Interacts (via N-terminus domain) with SETX. Interacts (via RRM1 and C-terminal RRM4/Arg/Gly-rich domains) with TERT; the interaction is important for nucleolar localization of TERT. Interacts with WDR46. Interacts with ZFP36. Interacts with LRRC34. Interacts with RRP1B. Interacts with HNRNPU; this interaction occurs during mitosis. Interacts with RIOK1; RIOK1 recruits NCL to the PRMT5 for symmetrically methylation. Interacts with ZBTB7B. Interacts with MDK; this interaction promotes NCL clustering and lateral movements of this complex into lipid rafts leading to MDK internalization. Interacts with HDGF. Interacts with ALKBH2. Interacts with IGFBP5; this interaction is necessary for IGFBP5 localization to the nucleus. Interacts with DDX24 (when ubiquitinated); this interaction may be important during ribosome biogenesis. In terms of processing, some glutamate residues are glycylated by TTLL8. This modification occurs exclusively on glutamate residues and results in a glycine chain on the gamma-carboxyl group. Post-translationally, symmetrically methylated by PRMT5.

It localises to the nucleus. Its subcellular location is the nucleolus. It is found in the cytoplasm. Functionally, nucleolin is the major nucleolar protein of growing eukaryotic cells. It is found associated with intranucleolar chromatin and pre-ribosomal particles. It induces chromatin decondensation by binding to histone H1. It is thought to play a role in pre-rRNA transcription and ribosome assembly. May play a role in the process of transcriptional elongation. Binds RNA oligonucleotides with 5'-UUAGGG-3' repeats more tightly than the telomeric single-stranded DNA 5'-TTAGGG-3' repeats. This chain is Nucleolin (NCL), found in Pongo abelii (Sumatran orangutan).